A 185-amino-acid chain; its full sequence is uncharacterized protein (185 aa).

This is an uncharacterized protein from Methanocaldococcus jannaschii (strain ATCC 43067 / DSM 2661 / JAL-1 / JCM 10045 / NBRC 100440) (Methanococcus jannaschii).